The following is a 193-amino-acid chain: MGEEIKRTIKFTLVFMVLLGLVYPFVMTGIANLLFPYQAKGSIIKVDGKPVGSELIGQKFTDPRWFMGRPSAVDYDATSSGGTNYALSNPKFHEELEKNIEEFLKKNPGVKRSEIPADIVTSSGSGLDPHISPKAAYLQVKRVAKVNGLPEEVVKKLVDKNIEGRFLGLFGEPRVNVLKLNLSLLEEIKKHKK.

The chain crosses the membrane as a helical span at residues 11–31; sequence FTLVFMVLLGLVYPFVMTGIA.

The protein belongs to the KdpC family. In terms of assembly, the system is composed of three essential subunits: KdpA, KdpB and KdpC.

Its subcellular location is the cell membrane. In terms of biological role, part of the high-affinity ATP-driven potassium transport (or Kdp) system, which catalyzes the hydrolysis of ATP coupled with the electrogenic transport of potassium into the cytoplasm. This subunit acts as a catalytic chaperone that increases the ATP-binding affinity of the ATP-hydrolyzing subunit KdpB by the formation of a transient KdpB/KdpC/ATP ternary complex. The polypeptide is Potassium-transporting ATPase KdpC subunit (Caldanaerobacter subterraneus subsp. tengcongensis (strain DSM 15242 / JCM 11007 / NBRC 100824 / MB4) (Thermoanaerobacter tengcongensis)).